The sequence spans 22 residues: Cysteine-rich venom protein collettin-a (22 aa).

Positions 1–15 are enriched in basic and acidic residues; that stretch reads SNKKNYQKEIVDKHN. Positions 1–22 are disordered; the sequence is SNKKNYQKEIVDKHNALRRSVK.

It belongs to the CRISP family. Post-translationally, contains 8 disulfide bonds. Expressed by the venom gland.

It is found in the secreted. This is Cysteine-rich venom protein collettin-a from Pseudechis colletti (Collett's snake).